We begin with the raw amino-acid sequence, 271 residues long: Mannosyl-3-phosphoglycerate phosphatase (271 aa).

Asp13 serves as the catalytic Nucleophile. Asp13, Asp15, and Asp214 together coordinate Mg(2+).

This sequence belongs to the HAD-like hydrolase superfamily. MPGP family. Mg(2+) serves as cofactor.

The protein localises to the cytoplasm. It carries out the reaction 2-O-(alpha-D-mannosyl)-3-phosphoglycerate + H2O = (2R)-2-O-(alpha-D-mannosyl)-glycerate + phosphate. The protein is Mannosyl-3-phosphoglycerate phosphatase of Escherichia coli O81 (strain ED1a).